A 308-amino-acid chain; its full sequence is Elongation factor Ts (308 aa).

The interval 80-83 (TDFV) is involved in Mg(2+) ion dislocation from EF-Tu.

The protein belongs to the EF-Ts family.

The protein resides in the cytoplasm. Functionally, associates with the EF-Tu.GDP complex and induces the exchange of GDP to GTP. It remains bound to the aminoacyl-tRNA.EF-Tu.GTP complex up to the GTP hydrolysis stage on the ribosome. In Allorhizobium ampelinum (strain ATCC BAA-846 / DSM 112012 / S4) (Agrobacterium vitis (strain S4)), this protein is Elongation factor Ts.